The chain runs to 519 residues: Probable pectinesterase/pectinesterase inhibitor 36 (519 aa).

An N-terminal signal peptide occupies residues 1–25 (MSTFVKVTDLITIMFFLAIAAVITA). Positions 27 to 141 (NTAELDVLEM…TFVLHEALAF (115 aa)) are pectinesterase inhibitor 36. N-linked (GlcNAc...) asparagine glycans are attached at residues asparagine 92 and asparagine 130. Residues 147 to 196 (GHMKKRLHGPARQGHGPTRPKHRPTRPNHGPGRSHHGPSRPNQNGGMLVS) form a disordered region. A compositionally biased stretch (basic residues) spans 164–184 (TRPKHRPTRPNHGPGRSHHGP). Positions 186–196 (RPNQNGGMLVS) are enriched in polar residues. A pectinesterase 36 region spans residues 205-505 (DFVVARDGSA…FTVSRFIQGD (301 aa)). Positions 283 and 313 each coordinate substrate. Catalysis depends on aspartate 336, which acts as the Proton donor; for pectinesterase activity. Residue aspartate 357 is the Nucleophile; for pectinesterase activity of the active site. Arginine 425 and tryptophan 427 together coordinate substrate.

This sequence in the N-terminal section; belongs to the PMEI family. In the C-terminal section; belongs to the pectinesterase family. Expressed in siliques.

The protein localises to the secreted. The protein resides in the cell wall. The enzyme catalyses [(1-&gt;4)-alpha-D-galacturonosyl methyl ester](n) + n H2O = [(1-&gt;4)-alpha-D-galacturonosyl](n) + n methanol + n H(+). Its pathway is glycan metabolism; pectin degradation; 2-dehydro-3-deoxy-D-gluconate from pectin: step 1/5. In terms of biological role, acts in the modification of cell walls via demethylesterification of cell wall pectin. This chain is Probable pectinesterase/pectinesterase inhibitor 36 (PME36), found in Arabidopsis thaliana (Mouse-ear cress).